The sequence spans 452 residues: Pup--protein ligase (452 aa).

Glutamate 9 is a binding site for Mg(2+). ATP is bound at residue arginine 53. Position 55 (tyrosine 55) interacts with Mg(2+). Aspartate 57 acts as the Proton acceptor in catalysis. Glutamate 63 serves as a coordination point for Mg(2+). Threonine 66 and tryptophan 419 together coordinate ATP.

The protein belongs to the Pup ligase/Pup deamidase family. Pup-conjugating enzyme subfamily.

The catalysed reaction is ATP + [prokaryotic ubiquitin-like protein]-L-glutamate + [protein]-L-lysine = ADP + phosphate + N(6)-([prokaryotic ubiquitin-like protein]-gamma-L-glutamyl)-[protein]-L-lysine.. It functions in the pathway protein degradation; proteasomal Pup-dependent pathway. The protein operates within protein modification; protein pupylation. Its function is as follows. Catalyzes the covalent attachment of the prokaryotic ubiquitin-like protein modifier Pup to the proteasomal substrate proteins, thereby targeting them for proteasomal degradation. This tagging system is termed pupylation. The ligation reaction involves the side-chain carboxylate of the C-terminal glutamate of Pup and the side-chain amino group of a substrate lysine. This chain is Pup--protein ligase, found in Mycobacteroides abscessus (strain ATCC 19977 / DSM 44196 / CCUG 20993 / CIP 104536 / JCM 13569 / NCTC 13031 / TMC 1543 / L948) (Mycobacterium abscessus).